The following is a 110-amino-acid chain: BET1-like protein (110 aa).

Topologically, residues methionine 1–lysine 85 are cytoplasmic. A t-SNARE coiled-coil homology domain is found at aspartate 14 to methionine 76. The helical; Anchor for type IV membrane protein transmembrane segment at isoleucine 86–serine 106 threads the bilayer. Residues arginine 107–asparagine 110 are Lumenal-facing.

In terms of assembly, component of a SNARE complex consisting of stx5, ykt6, gosr2 and bet1l.

It is found in the golgi apparatus membrane. In terms of biological role, vesicle SNARE required for targeting and fusion of retrograde transport vesicles with the Golgi complex. Required for the integrity of the Golgi complex. The sequence is that of BET1-like protein (bet1l) from Danio rerio (Zebrafish).